We begin with the raw amino-acid sequence, 96 residues long: Aspartyl/glutamyl-tRNA(Asn/Gln) amidotransferase subunit C (96 aa).

Belongs to the GatC family. Heterotrimer of A, B and C subunits.

The catalysed reaction is L-glutamyl-tRNA(Gln) + L-glutamine + ATP + H2O = L-glutaminyl-tRNA(Gln) + L-glutamate + ADP + phosphate + H(+). The enzyme catalyses L-aspartyl-tRNA(Asn) + L-glutamine + ATP + H2O = L-asparaginyl-tRNA(Asn) + L-glutamate + ADP + phosphate + 2 H(+). In terms of biological role, allows the formation of correctly charged Asn-tRNA(Asn) or Gln-tRNA(Gln) through the transamidation of misacylated Asp-tRNA(Asn) or Glu-tRNA(Gln) in organisms which lack either or both of asparaginyl-tRNA or glutaminyl-tRNA synthetases. The reaction takes place in the presence of glutamine and ATP through an activated phospho-Asp-tRNA(Asn) or phospho-Glu-tRNA(Gln). This Bacillus velezensis (strain DSM 23117 / BGSC 10A6 / LMG 26770 / FZB42) (Bacillus amyloliquefaciens subsp. plantarum) protein is Aspartyl/glutamyl-tRNA(Asn/Gln) amidotransferase subunit C.